The primary structure comprises 194 residues: NADH-quinone oxidoreductase subunit B (194 aa).

Positions 73, 74, 138, and 168 each coordinate [4Fe-4S] cluster.

This sequence belongs to the complex I 20 kDa subunit family. NDH-1 is composed of 14 different subunits. Subunits NuoB, C, D, E, F, and G constitute the peripheral sector of the complex. It depends on [4Fe-4S] cluster as a cofactor.

The protein localises to the cell inner membrane. It catalyses the reaction a quinone + NADH + 5 H(+)(in) = a quinol + NAD(+) + 4 H(+)(out). In terms of biological role, NDH-1 shuttles electrons from NADH, via FMN and iron-sulfur (Fe-S) centers, to quinones in the respiratory chain. The immediate electron acceptor for the enzyme in this species is believed to be ubiquinone. Couples the redox reaction to proton translocation (for every two electrons transferred, four hydrogen ions are translocated across the cytoplasmic membrane), and thus conserves the redox energy in a proton gradient. The chain is NADH-quinone oxidoreductase subunit B from Rhizobium leguminosarum bv. trifolii (strain WSM2304).